Reading from the N-terminus, the 230-residue chain is MAIGKRLKKVREGIDRTKLYPIAEAIKMVKERAVSKFDETIEIAFNLGVDPRHADQMVRGVVSLPNGTGRTLRVGVFARGAKADEARAAGADVVGAEDLVEKVQGGTIEFDRCIATPDMMPLVGRLGKVLGPRGMMPNPKIGTVTMDVAGAVAGAKGGNVEFRVEKAGIVQAGIGKASFSEEKLVENIKALTDAVSKAKPAGAKGTYIQRVAVSSTMGPGVKVEPGTILG.

This sequence belongs to the universal ribosomal protein uL1 family. Part of the 50S ribosomal subunit.

In terms of biological role, binds directly to 23S rRNA. The L1 stalk is quite mobile in the ribosome, and is involved in E site tRNA release. Protein L1 is also a translational repressor protein, it controls the translation of the L11 operon by binding to its mRNA. The chain is Large ribosomal subunit protein uL1 from Rhodopseudomonas palustris (strain BisA53).